The sequence spans 174 residues: Adenine phosphoribosyltransferase (174 aa).

Belongs to the purine/pyrimidine phosphoribosyltransferase family. As to quaternary structure, homodimer.

The protein resides in the cytoplasm. It carries out the reaction AMP + diphosphate = 5-phospho-alpha-D-ribose 1-diphosphate + adenine. The protein operates within purine metabolism; AMP biosynthesis via salvage pathway; AMP from adenine: step 1/1. Catalyzes a salvage reaction resulting in the formation of AMP, that is energically less costly than de novo synthesis. The protein is Adenine phosphoribosyltransferase of Nitrosomonas eutropha (strain DSM 101675 / C91 / Nm57).